The primary structure comprises 395 residues: L-methionine gamma-lyase (395 aa).

Pyridoxal 5'-phosphate contacts are provided by residues 56–58 and 86–87; these read YTR and GM. Tyr-111 provides a ligand contact to substrate. Pyridoxal 5'-phosphate is bound at residue 206-208; the sequence is SAT. Lys-209 is subject to N6-(pyridoxal phosphate)lysine. Arg-373 is a substrate binding site.

The protein belongs to the trans-sulfuration enzymes family. L-methionine gamma-lyase subfamily. Homotetramer. Requires pyridoxal 5'-phosphate as cofactor.

The catalysed reaction is L-methionine + H2O = methanethiol + 2-oxobutanoate + NH4(+). It catalyses the reaction L-homocysteine + H2O = 2-oxobutanoate + hydrogen sulfide + NH4(+) + H(+). The enzyme catalyses L-cysteine + H2O = hydrogen sulfide + pyruvate + NH4(+) + H(+). Its function is as follows. Catalyzes the alpha,gamma-elimination of L-methionine to produce methanethiol, 2-oxobutanoate and ammonia, and that of L-homocysteine. Can also use L-cysteine as substrate, catalyzing its alpha,beta-elimination; this activity seems to only minimally contribute to the production of hydrogen sulfide (H2S) by F.nucleatum in the oral cavity, which is toxic for a large variety of cells in periodontal regions. The sequence is that of L-methionine gamma-lyase from Fusobacterium nucleatum subsp. nucleatum (strain ATCC 25586 / DSM 15643 / BCRC 10681 / CIP 101130 / JCM 8532 / KCTC 2640 / LMG 13131 / VPI 4355).